The primary structure comprises 1356 residues: Tenascin-R (1356 aa).

The signal sequence occupies residues 1–31 (MGIEGETVVLKNMLIGVNLILLGSMLKPSEC). Residue Asn-55 is glycosylated (N-linked (GlcNAc...) asparagine). Residues 127 to 157 (CASSAQVLQELLSRIEMLEREVSVLRDQCNT) are a coiled coil. Ser-176 is a glycosylation site (O-linked (Xyl...) (chondroitin sulfate) serine). N-linked (GlcNAc...) asparagine glycans are attached at residues Asn-180 and Asn-198. 3 consecutive EGF-like domains span residues 188 to 199 (CICNEGWFGKNC), 204 to 230 (CPLG…GDDC), and 235 to 261 (CPTD…GEDC). Ser-271 is a glycosylation site (O-linked (Xyl...) (chondroitin sulfate) serine). Asn-278 is a glycosylation site (N-linked (GlcNAc...) asparagine). EGF-like domains are found at residues 281-292 (CLCQEGYAGEDC) and 293-324 (SQRR…PDCS). Disulfide bonds link Cys-297-Cys-307 and Cys-314-Cys-323. Residue Ser-302 is glycosylated (O-linked (Xyl...) (chondroitin sulfate) serine). Fibronectin type-III domains lie at 328 to 419 (PPED…TPQG), 420 to 504 (LQFK…TVID), 505 to 596 (GPTQ…IDAP), 597 to 686 (KNLR…TELD), 687 to 776 (SPRD…FRPI), 777 to 864 (SHLH…TGID), 865 to 953 (PPKN…AMDS), 954 to 1040 (PMDL…TLLD), and 1041 to 1129 (PPAN…GGRV). N-linked (GlcNAc...) asparagine glycans are attached at residues Asn-391, Asn-469, and Asn-580. Ser-723 carries the post-translational modification Phosphoserine. N-linked (GlcNAc...) asparagine glycosylation is found at Asn-790, Asn-868, Asn-873, Asn-1034, Asn-1044, and Asn-1259. The Fibrinogen C-terminal domain occupies 1127-1342 (GRVFSHPQDC…FVEMKMRPYI (216 aa)).

The protein belongs to the tenascin family. In terms of assembly, forms oligomers. Interacts with TNC and FN1. Interacts with BCAN and ACAN in a calcium -dependent manner. Interacts with CNTN1, SCN2B, PTPRZ1, and CSPG3. In terms of processing, contains N-linked oligosaccharides, O-linked sialylated structures. Contains O-linked chondroitin sulfate glycosaminoglycans. Contains N-linked oligosaccharides with a sulfated carbohydrate structure type GalNAc-4-SO4 or HNK-1 (SO4-3-GlcUABeta1,3GalBeta1,4GlcNAc). The levels of HNK-1 rise and fall in parallel to those of TNR during postnatal development of the cerebellum. In contrast, levels of GalNAc-4-SO4 are regulated independently from those of TNR, rising late in cerebellar development and continuing into adulthood. Early in postnatal development, GalNAc-4-SO4 is found predominantly on isoform 1, whereas in the adult it is predominantly on isoform 2. In terms of tissue distribution, brain-specific. Expressed in oligodendrocytes and small subsets of neurons (mainly interneurons and motoneurons) of the cerebellum, hippocampus and olfactory bulb. Expressed in dorsal root ganglia.

The protein localises to the secreted. The protein resides in the extracellular space. Its subcellular location is the extracellular matrix. Its function is as follows. Neural extracellular matrix (ECM) protein involved in interactions with different cells and matrix components. Theses interactions can influence cellular behavior by either evoking a stable adhesion and differentiation, or repulsion and inhibition of neurite growth. Binding to cell surface gangliosides inhibits RGD-dependent integrin-mediated cell adhesion and results in an inhibition of PTK2/FAK1 (FAK) phosphorylation and cell detachment. Binding to membrane surface sulfatides results in a oligodendrocyte adhesion and differentiation. Interaction with CNTN1 induces a repulsion of neurons and an inhibition of neurite outgrowth. Interacts with SCN2B may play a crucial role in clustering and regulation of activity of sodium channels at nodes of Ranvier. TNR-linked chondroitin sulfate glycosaminoglycans are involved in the interaction with FN1 and mediates inhibition of cell adhesion and neurite outgrowth. The highly regulated addition of sulfated carbohydrate structure may modulate the adhesive properties of TNR over the course of development and during synapse maintenance. The sequence is that of Tenascin-R (Tnr) from Rattus norvegicus (Rat).